Reading from the N-terminus, the 65-residue chain is DNA gyrase inhibitor YacG (65 aa).

The Zn(2+) site is built by Cys9, Cys12, Cys28, and Cys32. The tract at residues 43-65 (EEKRIPSQSENSDSDDWSGQPEQ) is disordered.

The protein belongs to the DNA gyrase inhibitor YacG family. As to quaternary structure, interacts with GyrB. Zn(2+) is required as a cofactor.

Functionally, inhibits all the catalytic activities of DNA gyrase by preventing its interaction with DNA. Acts by binding directly to the C-terminal domain of GyrB, which probably disrupts DNA binding by the gyrase. The sequence is that of DNA gyrase inhibitor YacG from Photorhabdus laumondii subsp. laumondii (strain DSM 15139 / CIP 105565 / TT01) (Photorhabdus luminescens subsp. laumondii).